Here is a 355-residue protein sequence, read N- to C-terminus: Protein RecA (355 aa).

Position 65–72 (65–72) interacts with ATP; that stretch reads GPESSGKT. Positions 333-355 are disordered; it reads IEEKDEKQAEAEKNENTNLFDEE. Residues 336–347 are compositionally biased toward basic and acidic residues; it reads KDEKQAEAEKNE.

The protein belongs to the RecA family.

The protein resides in the cytoplasm. Can catalyze the hydrolysis of ATP in the presence of single-stranded DNA, the ATP-dependent uptake of single-stranded DNA by duplex DNA, and the ATP-dependent hybridization of homologous single-stranded DNAs. It interacts with LexA causing its activation and leading to its autocatalytic cleavage. The chain is Protein RecA from Staphylococcus carnosus (strain TM300).